Consider the following 99-residue polypeptide: Integration host factor subunit alpha (99 aa).

Belongs to the bacterial histone-like protein family. As to quaternary structure, heterodimer of an alpha and a beta chain.

Its function is as follows. This protein is one of the two subunits of integration host factor, a specific DNA-binding protein that functions in genetic recombination as well as in transcriptional and translational control. In Xylella fastidiosa (strain 9a5c), this protein is Integration host factor subunit alpha (ihfA).